Consider the following 134-residue polypeptide: Alkaline proteinase inhibitor (134 aa).

An N-terminal signal peptide occupies residues 1 to 26; sequence MVFAAWYLKFAFFVALAFSIIGGSMA. C50 and C73 form a disulfide bridge.

Belongs to the protease inhibitor I38 family.

Its subcellular location is the periplasm. Inhibitor of the alkaline protease. This Photorhabdus luminescens (Xenorhabdus luminescens) protein is Alkaline proteinase inhibitor (inh).